Consider the following 286-residue polypeptide: Polyamine aminopropyltransferase (286 aa).

The PABS domain occupies 3-240; that stretch reads DLWYSESHAD…GHWLFGFASK (238 aa). Residue Gln-32 coordinates S-methyl-5'-thioadenosine. Positions 63 and 87 each coordinate spermidine. S-methyl-5'-thioadenosine contacts are provided by residues Glu-107 and 139–140; that span reads DG. Residue Asp-158 is the Proton acceptor of the active site. 158 to 161 contributes to the spermidine binding site; sequence DSTD. Residue Pro-165 coordinates S-methyl-5'-thioadenosine.

The protein belongs to the spermidine/spermine synthase family. In terms of assembly, homodimer or homotetramer.

Its subcellular location is the cytoplasm. It catalyses the reaction S-adenosyl 3-(methylsulfanyl)propylamine + putrescine = S-methyl-5'-thioadenosine + spermidine + H(+). The protein operates within amine and polyamine biosynthesis; spermidine biosynthesis; spermidine from putrescine: step 1/1. In terms of biological role, catalyzes the irreversible transfer of a propylamine group from the amino donor S-adenosylmethioninamine (decarboxy-AdoMet) to putrescine (1,4-diaminobutane) to yield spermidine. In Clostridium acetobutylicum (strain ATCC 824 / DSM 792 / JCM 1419 / IAM 19013 / LMG 5710 / NBRC 13948 / NRRL B-527 / VKM B-1787 / 2291 / W), this protein is Polyamine aminopropyltransferase.